Consider the following 304-residue polypeptide: Light-independent protochlorophyllide reductase iron-sulfur ATP-binding protein (304 aa).

ATP is bound by residues 46–51 (GIGKST) and lysine 75. Serine 50 is a Mg(2+) binding site. 2 residues coordinate [4Fe-4S] cluster: cysteine 131 and cysteine 165. ATP is bound by residues 216 to 217 (NR) and 240 to 242 (PDL).

It belongs to the NifH/BchL/ChlL family. Homodimer. Protochlorophyllide reductase is composed of three subunits; BchL, BchN and BchB. [4Fe-4S] cluster is required as a cofactor.

The enzyme catalyses chlorophyllide a + oxidized 2[4Fe-4S]-[ferredoxin] + 2 ADP + 2 phosphate = protochlorophyllide a + reduced 2[4Fe-4S]-[ferredoxin] + 2 ATP + 2 H2O. It participates in porphyrin-containing compound metabolism; bacteriochlorophyll biosynthesis (light-independent). Component of the dark-operative protochlorophyllide reductase (DPOR) that uses Mg-ATP and reduced ferredoxin to reduce ring D of protochlorophyllide (Pchlide) to form chlorophyllide a (Chlide). This reaction is light-independent. The L component serves as a unique electron donor to the NB-component of the complex, and binds Mg-ATP. In Rhodobacter capsulatus (strain ATCC BAA-309 / NBRC 16581 / SB1003), this protein is Light-independent protochlorophyllide reductase iron-sulfur ATP-binding protein.